A 515-amino-acid polypeptide reads, in one-letter code: Galactose/methyl galactoside import ATP-binding protein MglA (515 aa).

ABC transporter domains are found at residues 8–243 (LEMR…VGRE) and 254–499 (IPKE…AKYL). An ATP-binding site is contributed by 40–47 (GENGAGKS).

The protein belongs to the ABC transporter superfamily. Galactose/methyl galactoside importer (TC 3.A.1.2.3) family. The complex is composed of one ATP-binding protein (MglA), two transmembrane proteins (MglC) and a solute-binding protein (MglB).

It is found in the cell membrane. It catalyses the reaction D-galactose(out) + ATP + H2O = D-galactose(in) + ADP + phosphate + H(+). The catalysed reaction is methyl beta-D-galactoside(out) + ATP + H2O = methyl beta-D-galactoside(in) + ADP + phosphate + H(+). Functionally, part of the ABC transporter complex MglABC involved in galactose/methyl galactoside import. Responsible for energy coupling to the transport system. This chain is Galactose/methyl galactoside import ATP-binding protein MglA, found in Clostridium perfringens (strain 13 / Type A).